Consider the following 255-residue polypeptide: MVDRVAALCNYNVLEVVFSYLDLNDLGRCSQVCKSWFHFLNDENSDVWRFHCLNKLPKEVTKSELLSPVPTYKTKLRAFFHSWNPSDCSRNVYIKPNGFTLHRNPVAQSTDAARAKIGFRHGRHAWEVIWEGPLGTVAVIGISTKEAALQCHGYVALLGSDDQSWGWNLVENHLLHNGDMQGGYPLLNNAPKYQVGERIRVILDCDDNTLSFEKNYEFLGVAFRGLPDKKLFPTVSAVYGNTEVSMVYCGTPLDG.

The F-box domain occupies Asp3–His51. A B30.2/SPRY domain is found at Thr61–Leu253.

It belongs to the FBXO45/Fsn family. Component of an E3 ubiquitin ligase complex composed of hiw and Fsn.

It is found in the synapse. Its pathway is protein modification; protein ubiquitination. Its function is as follows. Required in the presynaptic motoneuron to down-regulate the levels of wnd and restrain synaptic terminal growth at the neuromuscular junction (NMJ). This Drosophila persimilis (Fruit fly) protein is F-box/SPRY domain-containing protein 1.